The primary structure comprises 352 residues: MMYKIVSIPGDGIGPEVVAGALDVLNAVAKKHGFEVSVEEHLFGGASYDVHGSMLTDETLEACKNCDAVLLGAVGGYKWENLPHDKKPEAALLKIRKELGLFANLRPARVYDALVASSTLKTEVVQGTDFMVFRELTGGIYFGQPRGYDETRGWNTMVYERYEVERIARLAFEYAQKRGNAKVTSIDKANVLEVSQFWRNIVHEVHQDFPEIELVDMYVDNAAMQVVRNPKQFEVIVTSNLFGDILSDISGMITGSLGMLPSASIGSEHALYEPIHGSAPDIAGQNKANPIATIASVAMMFENSFNRPEVAADIYAAIEGALAAGFRTGDIAAAGEAISSTTEMTAAIVARI.

76–89 contacts NAD(+); that stretch reads GYKWENLPHDKKPE. 4 residues coordinate substrate: R96, R106, R134, and D220. D220, D244, and D248 together coordinate Mg(2+). 277-289 serves as a coordination point for NAD(+); the sequence is GSAPDIAGQNKAN.

Belongs to the isocitrate and isopropylmalate dehydrogenases family. LeuB type 1 subfamily. Homodimer. It depends on Mg(2+) as a cofactor. Requires Mn(2+) as cofactor.

Its subcellular location is the cytoplasm. The enzyme catalyses (2R,3S)-3-isopropylmalate + NAD(+) = 4-methyl-2-oxopentanoate + CO2 + NADH. The protein operates within amino-acid biosynthesis; L-leucine biosynthesis; L-leucine from 3-methyl-2-oxobutanoate: step 3/4. In terms of biological role, catalyzes the oxidation of 3-carboxy-2-hydroxy-4-methylpentanoate (3-isopropylmalate) to 3-carboxy-4-methyl-2-oxopentanoate. The product decarboxylates to 4-methyl-2 oxopentanoate. This chain is 3-isopropylmalate dehydrogenase, found in Chlorobaculum tepidum (strain ATCC 49652 / DSM 12025 / NBRC 103806 / TLS) (Chlorobium tepidum).